The sequence spans 67 residues: Large ribosomal subunit protein bL35 (67 aa).

A compositionally biased stretch (basic residues) spans 1–32 (MPKLKNHSGAKKRFAKTATGKYKRRKAGRKHL). Positions 1–54 (MPKLKNHSGAKKRFAKTATGKYKRRKAGRKHLLTPQSGSRKREMRQTGIIKPES) are disordered.

Belongs to the bacterial ribosomal protein bL35 family.

The sequence is that of Large ribosomal subunit protein bL35 from Elusimicrobium minutum (strain Pei191).